Here is an 81-residue protein sequence, read N- to C-terminus: uncharacterized protein (81 aa).

A signal peptide spans 1-22; that stretch reads MNKKLSIIFLIFALIASVLCSA. A disordered region spans residues 29–81; it reads HSSSTTTTTSSSGGTSGTDSSINTGSSYSGSGSGSGSTGGSGSGSGSGTAKWK. The span at 30 to 58 shows a compositional bias: low complexity; the sequence is SSSTTTTTSSSGGTSGTDSSINTGSSYSG. Residues 59 to 75 are compositionally biased toward gly residues; the sequence is SGSGSGSTGGSGSGSGS.

The protein localises to the secreted. This is an uncharacterized protein from Dictyostelium discoideum (Social amoeba).